The sequence spans 670 residues: uncharacterized protein (670 aa).

The next 10 membrane-spanning stretches (helical) occupy residues tyrosine 23–asparagine 42, tyrosine 47–leucine 69, leucine 76–leucine 98, valine 118–threonine 140, valine 153–leucine 170, glutamine 381–alanine 403, serine 410–valine 432, leucine 437–leucine 454, phenylalanine 461–valine 483, and asparagine 493–leucine 510.

Belongs to the aromatic acid exporter ArAE (TC 2.A.85) family.

It localises to the cell membrane. This is an uncharacterized protein from Escherichia coli O157:H7.